We begin with the raw amino-acid sequence, 449 residues long: Tubulin alpha-2B chain (449 aa).

Gln-11 lines the GTP pocket. Residue Lys-40 is modified to N6-acetyllysine. GTP is bound by residues Glu-71, Ser-140, Gly-144, Thr-145, Thr-179, Asn-206, and Asn-228. Glu-71 contributes to the Mg(2+) binding site. The active site involves Glu-254.

This sequence belongs to the tubulin family. In terms of assembly, dimer of alpha and beta chains. A typical microtubule is a hollow water-filled tube with an outer diameter of 25 nm and an inner diameter of 15 nM. Alpha-beta heterodimers associate head-to-tail to form protofilaments running lengthwise along the microtubule wall with the beta-tubulin subunit facing the microtubule plus end conferring a structural polarity. Microtubules usually have 13 protofilaments but different protofilament numbers can be found in some organisms and specialized cells. The cofactor is Mg(2+). In terms of processing, acetylation of alpha chains at Lys-40 stabilizes microtubules and affects affinity and processivity of microtubule motors. This modification has a role in multiple cellular functions, ranging from cell motility, cell cycle progression or cell differentiation to intracellular trafficking and signaling.

The protein localises to the cytoplasm. It is found in the cytoskeleton. The protein resides in the spindle. It localises to the nucleus. It catalyses the reaction GTP + H2O = GDP + phosphate + H(+). Functionally, tubulin is the major constituent of microtubules, a cylinder consisting of laterally associated linear protofilaments composed of alpha- and beta-tubulin heterodimers. Microtubules grow by the addition of GTP-tubulin dimers to the microtubule end, where a stabilizing cap forms. Below the cap, tubulin dimers are in GDP-bound state, owing to GTPase activity of alpha-tubulin. The polypeptide is Tubulin alpha-2B chain (ALTBE) (Physarum polycephalum (Slime mold)).